The following is a 98-amino-acid chain: NADH-ubiquinone oxidoreductase chain 4L (98 aa).

3 helical membrane passes run 1–21, 25–45, and 59–81; these read MSLA…GLLM, HLMS…VMAT, and MPII…LVMV.

This sequence belongs to the complex I subunit 4L family. Core subunit of respiratory chain NADH dehydrogenase (Complex I) which is composed of 45 different subunits.

The protein resides in the mitochondrion inner membrane. The enzyme catalyses a ubiquinone + NADH + 5 H(+)(in) = a ubiquinol + NAD(+) + 4 H(+)(out). Its function is as follows. Core subunit of the mitochondrial membrane respiratory chain NADH dehydrogenase (Complex I) which catalyzes electron transfer from NADH through the respiratory chain, using ubiquinone as an electron acceptor. Part of the enzyme membrane arm which is embedded in the lipid bilayer and involved in proton translocation. The sequence is that of NADH-ubiquinone oxidoreductase chain 4L (MT-ND4L) from Equus asinus (Donkey).